A 1199-amino-acid chain; its full sequence is Nucleolar protein 6 (1199 aa).

A compositionally biased stretch (basic residues) spans 1–10 (MLRNKRKAGK). Disordered regions lie at residues 1–51 (MLRN…EPKP) and 1146–1199 (KREQ…KALK). Composition is skewed to basic and acidic residues over residues 28–37 (HAEDHSDLEH) and 1146–1169 (KREQREHQKPKRYFDAKQTEEKST).

The protein belongs to the NRAP family. As to quaternary structure, part of the small subunit (SSU) processome, composed of more than 70 proteins and the RNA chaperone small nucleolar RNA (snoRNA) U3.

Its subcellular location is the nucleus. It is found in the nucleolus. The protein resides in the chromosome. Part of the small subunit (SSU) processome, first precursor of the small eukaryotic ribosomal subunit. During the assembly of the SSU processome in the nucleolus, many ribosome biogenesis factors, an RNA chaperone and ribosomal proteins associate with the nascent pre-rRNA and work in concert to generate RNA folding, modifications, rearrangements and cleavage as well as targeted degradation of pre-ribosomal RNA by the RNA exosome. This chain is Nucleolar protein 6, found in Drosophila yakuba (Fruit fly).